Here is a 105-residue protein sequence, read N- to C-terminus: Large ribosomal subunit protein uL24 (105 aa).

The protein belongs to the universal ribosomal protein uL24 family. As to quaternary structure, part of the 50S ribosomal subunit.

Functionally, one of two assembly initiator proteins, it binds directly to the 5'-end of the 23S rRNA, where it nucleates assembly of the 50S subunit. In terms of biological role, one of the proteins that surrounds the polypeptide exit tunnel on the outside of the subunit. In Clostridium botulinum (strain ATCC 19397 / Type A), this protein is Large ribosomal subunit protein uL24.